Consider the following 89-residue polypeptide: MSERKAVIKNADMPEDMQQDAVDCATQALEKFNIEKDIAAYIKKEFDKKYNPTWHCIVGRNFGSYVTHETKHFIYFYLGQVAVLLFKSG.

Belongs to the dynein light chain family. In terms of assembly, consists of at least 3 heavy chains (alpha, beta and gamma), 2 intermediate chains and 8 light chains.

It is found in the cytoplasm. Its subcellular location is the cytoskeleton. It localises to the flagellum axoneme. The protein is Dynein light chain LC6, flagellar outer arm of Heliocidaris crassispina (Sea urchin).